We begin with the raw amino-acid sequence, 383 residues long: Arginine biosynthesis bifunctional protein ArgJ (383 aa).

The substrate site is built by Thr-146, Lys-168, Thr-179, Glu-259, Asn-378, and Ser-383. Thr-179 (nucleophile) is an active-site residue.

It belongs to the ArgJ family. As to quaternary structure, heterotetramer of two alpha and two beta chains.

It localises to the cytoplasm. The enzyme catalyses N(2)-acetyl-L-ornithine + L-glutamate = N-acetyl-L-glutamate + L-ornithine. The catalysed reaction is L-glutamate + acetyl-CoA = N-acetyl-L-glutamate + CoA + H(+). The protein operates within amino-acid biosynthesis; L-arginine biosynthesis; L-ornithine and N-acetyl-L-glutamate from L-glutamate and N(2)-acetyl-L-ornithine (cyclic): step 1/1. It participates in amino-acid biosynthesis; L-arginine biosynthesis; N(2)-acetyl-L-ornithine from L-glutamate: step 1/4. Its function is as follows. Catalyzes two activities which are involved in the cyclic version of arginine biosynthesis: the synthesis of N-acetylglutamate from glutamate and acetyl-CoA as the acetyl donor, and of ornithine by transacetylation between N(2)-acetylornithine and glutamate. The chain is Arginine biosynthesis bifunctional protein ArgJ from Streptomyces coelicolor (strain ATCC BAA-471 / A3(2) / M145).